Here is an 84-residue protein sequence, read N- to C-terminus: Defensin-like protein 172 (84 aa).

A signal peptide spans 1–23 (MAKASSTLVLSIIFLVMFALVEQ). Disulfide bonds link Cys27–Cys74, Cys34–Cys56, Cys40–Cys68, and Cys44–Cys70.

It belongs to the DEFL family.

Its subcellular location is the secreted. The chain is Defensin-like protein 172 (LCR60) from Arabidopsis thaliana (Mouse-ear cress).